A 149-amino-acid polypeptide reads, in one-letter code: Cyanate hydratase (149 aa).

Active-site residues include Arg-90, Glu-93, and Ser-116.

Belongs to the cyanase family.

It catalyses the reaction cyanate + hydrogencarbonate + 3 H(+) = NH4(+) + 2 CO2. Functionally, catalyzes the reaction of cyanate with bicarbonate to produce ammonia and carbon dioxide. In Synechocystis sp. (strain ATCC 27184 / PCC 6803 / Kazusa), this protein is Cyanate hydratase.